A 1225-amino-acid chain; its full sequence is MVDVNRFKSMQITLASPSKVRSWSYGEVKKPETINYRTLKPEREGLFDEVIFGPTKDWECACGKYKRIRYRGIVCDRCGVEVTRTKVRRERMGHIELKAPVSHIWYFKGIPSRMGLTLDMSPRALEEVIYFAAYVVIDPKDTPLEHKSIMTEREYRERLREYGYGSFVAKMGAEAIQDLLKQVDLEKEIAELKEELKTATGQKRVKAIRRLDVLDAFYKSGNKPEWMILNILPVIPPDLRPMLQLDGGRFASSDLNDLYRRVINRNNRLARLLELNAPGIIVQNEKRMLQEAVDALIDNGRRGRPITGPGSRPLKSLSHMLKGKQGRFRQNLLGKRVDFSGRSVIAVGPTLKMYQCGVPREMAIELFKPFVMREIVARDIVQNVKAAKRLVERGDERIWDILEEVIKEHPVLLNRAPTLHRLGIQAFEPVLIDGKALRLHPLVCEAYNADFDGDQMAIHVPLSEEAQAEARILMLAAEHILNPKDGKPVVTPSQDMVLGNYYLTMEEAGREGEGMVFKDRDEAVMAYRNGYVHLHSRVGIATDSLNKPWTEEQRHKVLLTTVGKILFNDIMPEGLPYLQEPNNANLTEGVPAKYFLPLGGDIKEAISNLELNPPFKKKNLGNIIAEIFKRFRTTETSALLDRMKNLGYHHSTLAGLTVGIADIPVVDDKAEIIEESHKRVEQITKQFRRGMITDDERYNAVTAEWRAAREKLEKRLIANQDPKNPIVMMMDSGARGNISNFSQLAGMRGLMAAPNGRIMELPILSNFREGLSVLEMFFSTHGARKGMTDTALKTADSGYLTRRLVDVAQDVIIREDDCGTDRGLLIRSIAEGKEMIESLEERLNGRYTKKTVKHPETGAVIIGPNELITEDKAREIVNAGVEEVTIRSVFTCNTRHGVCRHCYGINLATGDAVEVGEAVGTIAAQSIGEPGTQLTMRTFHTGGVASNTDITQGLPRVQEIFEARNPKGEAVITEVKGQVTAIEEDASTRTKKVFVKGETGEGEYVVPFTARMRVEVGGQVARGAALTEGSIQPKRLLAVRDVLSVETYLLGEVQKVYRSQGVEIGDKHIEVMVRQMIRKVRVMDPGDTDLLMGTLMDINDFTDANKDVLIAGGVPATGRPVLMGITKASLETNSFLSAASFQETTRVLTDAAIRGKKDHLLGLKENVIIGKIIPAGTGMARYRNLEPHAVNEEEYLNPPVEEEGNEETTEVVVDTAVETVEETVE.

Zn(2+) contacts are provided by Cys-60, Cys-62, Cys-75, and Cys-78. Mg(2+) contacts are provided by Asp-450, Asp-452, and Asp-454. 4 residues coordinate Zn(2+): Cys-818, Cys-892, Cys-899, and Cys-902.

It belongs to the RNA polymerase beta' chain family. In terms of assembly, the RNAP catalytic core consists of 2 alpha, 1 beta, 1 beta' and 1 omega subunit. When a sigma factor is associated with the core the holoenzyme is formed, which can initiate transcription. Mg(2+) is required as a cofactor. It depends on Zn(2+) as a cofactor.

The enzyme catalyses RNA(n) + a ribonucleoside 5'-triphosphate = RNA(n+1) + diphosphate. In terms of biological role, DNA-dependent RNA polymerase catalyzes the transcription of DNA into RNA using the four ribonucleoside triphosphates as substrates. The chain is DNA-directed RNA polymerase subunit beta' from Streptococcus pneumoniae (strain Hungary19A-6).